Reading from the N-terminus, the 292-residue chain is Ribonuclease HIII (292 aa).

Positions 76 to 292 (TNLIGTDEVG…TQKAMKIAQL (217 aa)) constitute an RNase H type-2 domain. A divalent metal cation is bound by residues Asp82, Glu83, and Asp186.

This sequence belongs to the RNase HII family. RnhC subfamily. It depends on Mn(2+) as a cofactor. The cofactor is Mg(2+).

It is found in the cytoplasm. The catalysed reaction is Endonucleolytic cleavage to 5'-phosphomonoester.. Its function is as follows. Endonuclease that specifically degrades the RNA of RNA-DNA hybrids. This Lactococcus lactis subsp. cremoris (strain SK11) protein is Ribonuclease HIII.